Here is a 140-residue protein sequence, read N- to C-terminus: Putative pre-16S rRNA nuclease (140 aa).

Belongs to the YqgF nuclease family.

It localises to the cytoplasm. Could be a nuclease involved in processing of the 5'-end of pre-16S rRNA. This Yersinia pseudotuberculosis serotype O:1b (strain IP 31758) protein is Putative pre-16S rRNA nuclease.